Here is a 105-residue protein sequence, read N- to C-terminus: Iron-sulfur cluster assembly protein CyaY (105 aa).

Belongs to the frataxin family.

Functionally, involved in iron-sulfur (Fe-S) cluster assembly. May act as a regulator of Fe-S biogenesis. The polypeptide is Iron-sulfur cluster assembly protein CyaY (Paraburkholderia phymatum (strain DSM 17167 / CIP 108236 / LMG 21445 / STM815) (Burkholderia phymatum)).